The primary structure comprises 420 residues: Shaggy-related protein kinase delta (420 aa).

A disordered region spans residues 1–61 (MESHLGNGVG…DIIDGVGAEP (61 aa)). A compositionally biased stretch (polar residues) spans 10 to 26 (GSSRSAKNTKNTSSSVD). A compositionally biased stretch (basic and acidic residues) spans 28 to 41 (LSRDMLEMKIRDKT). The span at 42 to 53 (EADEERDSEPDI) shows a compositional bias: acidic residues. Residues 82 to 366 (YIAEHVVGTG…AVEACIHPFF (285 aa)) form the Protein kinase domain. Residues 88–96 (VGTGSFGMV) and lysine 111 contribute to the ATP site. Aspartate 207 serves as the catalytic Proton acceptor. Tyrosine 242 carries the post-translational modification Phosphotyrosine.

It belongs to the protein kinase superfamily. CMGC Ser/Thr protein kinase family. GSK-3 subfamily. Autophosphorylated mainly on threonine and serine residues.

It carries out the reaction L-seryl-[protein] + ATP = O-phospho-L-seryl-[protein] + ADP + H(+). The catalysed reaction is L-threonyl-[protein] + ATP = O-phospho-L-threonyl-[protein] + ADP + H(+). May mediate extracellular signals to regulate transcription in differentiating cells. The polypeptide is Shaggy-related protein kinase delta (ASK4) (Arabidopsis thaliana (Mouse-ear cress)).